The chain runs to 205 residues: MIGKLKGVVDTLEEDHVILDVHGVGYLVHCSGRTLSALPRAGEAAALFIETHVREDQIRLFGFSSAAERDWFRLLQGIQGIGTKTALAVLSTLSASELTQAIALGDKTTVARAPGVGPRVATRIITELKDKMPGFSASEPLAAQLGGGGVASAQGGAAADAVSALVNLGYGVPQANAAIAAALRGAGEGAKTEVLIRLGLKELAK.

Residues 1 to 64 (MIGKLKGVVD…EDQIRLFGFS (64 aa)) are domain I. Positions 65 to 143 (SAAERDWFRL…GFSASEPLAA (79 aa)) are domain II. Positions 144–152 (QLGGGGVAS) are flexible linker. The domain III stretch occupies residues 153–205 (AQGGAAADAVSALVNLGYGVPQANAAIAAALRGAGEGAKTEVLIRLGLKELAK).

It belongs to the RuvA family. As to quaternary structure, homotetramer. Forms an RuvA(8)-RuvB(12)-Holliday junction (HJ) complex. HJ DNA is sandwiched between 2 RuvA tetramers; dsDNA enters through RuvA and exits via RuvB. An RuvB hexamer assembles on each DNA strand where it exits the tetramer. Each RuvB hexamer is contacted by two RuvA subunits (via domain III) on 2 adjacent RuvB subunits; this complex drives branch migration. In the full resolvosome a probable DNA-RuvA(4)-RuvB(12)-RuvC(2) complex forms which resolves the HJ.

The protein localises to the cytoplasm. Its function is as follows. The RuvA-RuvB-RuvC complex processes Holliday junction (HJ) DNA during genetic recombination and DNA repair, while the RuvA-RuvB complex plays an important role in the rescue of blocked DNA replication forks via replication fork reversal (RFR). RuvA specifically binds to HJ cruciform DNA, conferring on it an open structure. The RuvB hexamer acts as an ATP-dependent pump, pulling dsDNA into and through the RuvAB complex. HJ branch migration allows RuvC to scan DNA until it finds its consensus sequence, where it cleaves and resolves the cruciform DNA. The chain is Holliday junction branch migration complex subunit RuvA from Xanthobacter autotrophicus (strain ATCC BAA-1158 / Py2).